A 220-amino-acid polypeptide reads, in one-letter code: Protein-L-isoaspartate O-methyltransferase (220 aa).

Ser-65 is an active-site residue.

Belongs to the methyltransferase superfamily. L-isoaspartyl/D-aspartyl protein methyltransferase family.

The protein resides in the cytoplasm. The catalysed reaction is [protein]-L-isoaspartate + S-adenosyl-L-methionine = [protein]-L-isoaspartate alpha-methyl ester + S-adenosyl-L-homocysteine. Catalyzes the methyl esterification of L-isoaspartyl residues in peptides and proteins that result from spontaneous decomposition of normal L-aspartyl and L-asparaginyl residues. It plays a role in the repair and/or degradation of damaged proteins. The sequence is that of Protein-L-isoaspartate O-methyltransferase from Pelodictyon phaeoclathratiforme (strain DSM 5477 / BU-1).